The sequence spans 105 residues: Small cysteine and glycine repeat-containing protein 4 (105 aa).

The interval 4 to 87 is 14 X 2 AA repeats of CG; it reads CGCGSCGGCG…RRTCGSCGCG (84 aa).

This sequence belongs to the KRTAP type 28 family.

In terms of biological role, in the hair cortex, hair keratin intermediate filaments are embedded in an interfilamentous matrix, consisting of hair keratin-associated proteins (KRTAP), which are essential for the formation of a rigid and resistant hair shaft through their extensive disulfide bond cross-linking with abundant cysteine residues of hair keratins. The matrix proteins include the high-sulfur and high-glycine-tyrosine keratins. The sequence is that of Small cysteine and glycine repeat-containing protein 4 from Homo sapiens (Human).